Here is a 580-residue protein sequence, read N- to C-terminus: Tricyclene synthase TPS4, chloroplastic (580 aa).

The transit peptide at 1–41 directs the protein to the chloroplast; it reads MLLNSSFISLPSFFKSQELGRTNLLIHRNGSPLLCYATNTN. Arginine 296, aspartate 334, aspartate 338, arginine 475, and asparagine 478 together coordinate (2E)-geranyl diphosphate. Residues aspartate 334 and aspartate 338 each contribute to the Mg(2+) site. The short motif at 334 to 338 is the DDXXD motif element; the sequence is DDIYD. Residues asparagine 478, threonine 482, and glutamate 486 each contribute to the Mg(2+) site.

Belongs to the terpene synthase family. Tpsb subfamily. The cofactor is Mg(2+). It depends on Mn(2+) as a cofactor. As to expression, expressed in leaves.

It is found in the plastid. Its subcellular location is the chloroplast stroma. It catalyses the reaction (2E)-geranyl diphosphate = tricyclene + diphosphate. It carries out the reaction (2E)-geranyl diphosphate = (E)-beta-ocimene + diphosphate. The protein operates within secondary metabolite biosynthesis; terpenoid biosynthesis. In terms of biological role, promotes the emission of terpenes volatile organic compounds (VOC) in response to damage mediated by arthropod herbivores (e.g. Spodoptera exigua), probably to attract natural enemies of the herbivores. This chain is Tricyclene synthase TPS4, chloroplastic (TPS4), found in Medicago truncatula (Barrel medic).